Consider the following 605-residue polypeptide: Elongation factor 4 (605 aa).

Residues 9 to 192 (GMIRNFCIIA…AIVARVPAPA (184 aa)) form the tr-type G domain. GTP is bound by residues 21 to 26 (DHGKST) and 139 to 142 (NKID).

This sequence belongs to the TRAFAC class translation factor GTPase superfamily. Classic translation factor GTPase family. LepA subfamily.

The protein resides in the cell inner membrane. It catalyses the reaction GTP + H2O = GDP + phosphate + H(+). In terms of biological role, required for accurate and efficient protein synthesis under certain stress conditions. May act as a fidelity factor of the translation reaction, by catalyzing a one-codon backward translocation of tRNAs on improperly translocated ribosomes. Back-translocation proceeds from a post-translocation (POST) complex to a pre-translocation (PRE) complex, thus giving elongation factor G a second chance to translocate the tRNAs correctly. Binds to ribosomes in a GTP-dependent manner. The sequence is that of Elongation factor 4 from Chlorobaculum tepidum (strain ATCC 49652 / DSM 12025 / NBRC 103806 / TLS) (Chlorobium tepidum).